A 553-amino-acid chain; its full sequence is Methyl-coenzyme M reductase II subunit alpha (553 aa).

Position 150 (Q150) interacts with coenzyme F430. Coenzyme B is bound by residues R228, 259–260 (KH), and R273. Residue H260 is modified to Pros-methylhistidine. R274 carries the post-translational modification 5-methylarginine. Residue Y335 coordinates coenzyme M. The residue at position 402 (Q402) is a 2-methylglutamine. Coenzyme M is bound at residue Y446. A 1-thioglycine modification is found at G447. The residue at position 452 (D452) is a (Z)-2,3-didehydroaspartate. C454 bears the S-methylcysteine mark.

The protein belongs to the methyl-coenzyme M reductase alpha subunit family. In terms of assembly, MCR is a hexamer of two alpha, two beta, and two gamma chains, forming a dimer of heterotrimers. Requires coenzyme F430 as cofactor. The alpha subunit contains six modified amino acids near the active site region. Is methylated on His-260, Arg-274, Gln-402 and Cys-454, probably by the action of specific S-adenosylmethionine-dependent methyltransferases. Also contains a thioglycine at position 447, forming a thiopeptide bond. Contains a didehydroaspartate residue at position 452. The methylation on C5 of Arg-274 is a post-translational methylation not essential in vivo, but which plays a role for the stability and structural integrity of MCR.

It catalyses the reaction coenzyme B + methyl-coenzyme M = methane + coenzyme M-coenzyme B heterodisulfide. Its pathway is one-carbon metabolism; methyl-coenzyme M reduction; methane from methyl-coenzyme M: step 1/1. Its function is as follows. Component of the methyl-coenzyme M reductase (MCR) I that catalyzes the reductive cleavage of methyl-coenzyme M (CoM-S-CH3 or 2-(methylthio)ethanesulfonate) using coenzyme B (CoB or 7-mercaptoheptanoylthreonine phosphate) as reductant which results in the production of methane and the mixed heterodisulfide of CoB and CoM (CoM-S-S-CoB). This is the final step in methanogenesis. The sequence is that of Methyl-coenzyme M reductase II subunit alpha (mrtA) from Methanothermobacter thermautotrophicus (strain ATCC 29096 / DSM 1053 / JCM 10044 / NBRC 100330 / Delta H) (Methanobacterium thermoautotrophicum).